Consider the following 136-residue polypeptide: HTH-type transcriptional regulator LrpA (136 aa).

The region spanning 2–63 (IDEIDKKILD…EVNQVKLGFS (62 aa)) is the HTH asnC-type domain. The segment at residues 21–40 (MKKLGEKVHLTAPATASRVV) is a DNA-binding region (H-T-H motif).

Functionally, negative regulation of glyA transcription and kinB-dependent sporulation. The protein is HTH-type transcriptional regulator LrpA (lrpA) of Bacillus subtilis (strain 168).